Consider the following 520-residue polypeptide: MQTQKPTLELLTCEGAYRDNPTALFHQLCGDRPATLLLESADIDSKDDLKSLLLVDSALRITALGDTVTIQALSGNGEALLALLDNALPAGVESEQSPNCRVLRFPPVSPLLDEDARLCSLSVFDAFRLLQNLLNVPKEEREAMFFGGLFSYDLVAGFEDLPQLSAENNCPDFCFYLAETLMVIDHQKKSTRIQASLFAPNEEEKQRLTARLNELRQQLTEAAPPLPVVSVPHMRCECNQSDEEFGGVVRLLQKAIRAGEIFQVVPSRRFSLPCPSPLAAYYVLKKSNPSPYMFFMQDNDFTLFGASPESSLKYDATSRQIEIYPIAGTRPRGRRADGSLDRDLDSRIELEMRTDHKELSEHLMLVDLARNDLARICTPGSRYVADLTKVDRYSYVMHLVSRVVGELRHDLDALHAYRACMNMGTLSGAPKVRAMQLIAEAEGRRRGSYGGAVGYFTAHGDLDTCIVIRSALVENGIATVQAGAGVVLDSVPQSEADETRNKARAVLRAIATAHHAQETF.

Residues S40 and 291–293 (PYM) contribute to the L-tryptophan site. 328-329 (GT) contributes to the chorismate binding site. E361 contacts Mg(2+). Residues Y449, R469, 483–485 (GAG), and G485 each bind chorismate. E498 is a binding site for Mg(2+).

The protein belongs to the anthranilate synthase component I family. As to quaternary structure, heterotetramer consisting of two non-identical subunits: a beta subunit (TrpG) and a large lpha subunit (TrpE). Mg(2+) serves as cofactor.

It catalyses the reaction chorismate + L-glutamine = anthranilate + pyruvate + L-glutamate + H(+). Its pathway is amino-acid biosynthesis; L-tryptophan biosynthesis; L-tryptophan from chorismate: step 1/5. Cooperatively feedback inhibited by tryptophan. Part of a heterotetrameric complex that catalyzes the two-step biosynthesis of anthranilate, an intermediate in the biosynthesis of L-tryptophan. In the first step, the glutamine-binding beta subunit (TrpG) of anthranilate synthase (AS) provides the glutamine amidotransferase activity which generates ammonia as a substrate that, along with chorismate, is used in the second step, catalyzed by the large alpha subunit of AS (TrpE) to produce anthranilate. In the absence of TrpG, TrpE can synthesize anthranilate directly from chorismate and high concentrations of ammonia. The sequence is that of Anthranilate synthase component 1 (trpE) from Escherichia coli (strain K12).